Consider the following 397-residue polypeptide: Inositol 3-kinase (397 aa).

Residues S228, 278–281 (GAGD), and N305 each bind ATP. The active-site Proton acceptor is D281.

It belongs to the carbohydrate kinase pfkB family. Expressed in roots, leaf blade shoots, leaf sheath shoots and panicles.

It catalyses the reaction myo-inositol + ATP = 1D-myo-inositol 3-phosphate + ADP + H(+). Kinase that phosphorylates myo-inositol to produce multiple myo-inositol monophosphates. Participates in phytic acid biosynthesis in developing seeds. Phytic acid is the primary storage form of phosphorus in cereal grains and other plant seeds. This chain is Inositol 3-kinase, found in Oryza sativa subsp. japonica (Rice).